Reading from the N-terminus, the 283-residue chain is Gap junction beta-1 protein (283 aa).

The Cytoplasmic portion of the chain corresponds to 1–22 (MNWTGLYTLLSGVNRHSTAIGR). A helical transmembrane segment spans residues 23–45 (VWLSVIFIFRIMVLVVAAESVWG). Topologically, residues 46-75 (DEKSSFICNTLQPGCNSVCYDQFFPISHVR) are extracellular. Residues 76-95 (LWSLQLILVSTPALLVAMHV) traverse the membrane as a helical segment. Residues 96-130 (AHQQHIEKKMLRLEGHGDPLHLEEVKRHKVHISGT) lie on the Cytoplasmic side of the membrane. The helical transmembrane segment at 131 to 153 (LWWAYVISVVFRLLFEAVFMYVF) threads the bilayer. At 154–191 (YLLYPGYAMVRLVKCDVYPCPNTVDCFVSRPTEKTVFT) the chain is on the extracellular side. The helical transmembrane segment at 192–214 (VFMLAASGICIILNVAEVVYLII) threads the bilayer. Over 215–283 (RACARRAQRR…AEKSDRCSAC (69 aa)) the chain is Cytoplasmic. A phosphoserine mark is found at S233, S258, S266, and S277.

It belongs to the connexin family. Beta-type (group I) subfamily. In terms of assembly, a connexon is composed of a hexamer of connexins. Interacts with CNST.

The protein localises to the cell membrane. It is found in the cell junction. It localises to the gap junction. Its function is as follows. One gap junction consists of a cluster of closely packed pairs of transmembrane channels, the connexons, through which materials of low MW diffuse from one cell to a neighboring cell. This is Gap junction beta-1 protein (GJB1) from Macaca fascicularis (Crab-eating macaque).